Consider the following 320-residue polypeptide: Cytochrome f (320 aa).

The signal sequence occupies residues 1 to 35; it reads MQNRNFNNLIIKWAIRLISIMIIINTIFWSSISEA. The heme site is built by phenylalanine 36, cysteine 56, cysteine 59, and histidine 60. Residues 286–305 form a helical membrane-spanning segment; the sequence is IQGLLLFFGSVILAQIFLVL.

The protein belongs to the cytochrome f family. The 4 large subunits of the cytochrome b6-f complex are cytochrome b6, subunit IV (17 kDa polypeptide, petD), cytochrome f and the Rieske protein, while the 4 small subunits are PetG, PetL, PetM and PetN. The complex functions as a dimer. Heme is required as a cofactor.

Its subcellular location is the plastid. It localises to the chloroplast thylakoid membrane. In terms of biological role, component of the cytochrome b6-f complex, which mediates electron transfer between photosystem II (PSII) and photosystem I (PSI), cyclic electron flow around PSI, and state transitions. In Marchantia polymorpha (Common liverwort), this protein is Cytochrome f (petA).